Here is a 665-residue protein sequence, read N- to C-terminus: Target of rapamycin complex 2 subunit sin1 (665 aa).

The residue at position 62 (Ser62) is a Phosphoserine. Polar residues-rich tracts occupy residues 65 to 83 (IVANDTVSNVRKPSDTKQV) and 100 to 109 (YATSDLSESS). Residues 65–112 (IVANDTVSNVRKPSDTKQVNGAGGQVNHSRAEDSDYATSDLSESSDVG) are disordered. Ser133 is subject to Phosphoserine. The CRIM domain maps to 255-392 (TSALRALLEH…ATPAQIKENQ (138 aa)). The tract at residues 395 to 433 (YPFKSKHPTSIPEANNKTHIRHTSSTSSQSQKQAQDVKD) is disordered. Phosphoserine occurs at positions 404, 490, 502, and 530. Residues 517–537 (RDKKGSTQQLPTSSPQNSVYG) are disordered. Residues 522-536 (STQQLPTSSPQNSVY) are compositionally biased toward polar residues. The SIN1-type PH domain maps to 558-659 (TYQEFLVWKR…IVSRIRALMN (102 aa)).

It belongs to the SIN1 family. The target of rapamycin complex 2 (TORC2) is composed of at least bit61, pop3/wat1, sin1, ste20 and tor1. Interacts with the sty1 MAP kinase. Phosphorylated; under environmental stress. Either Ser-61 or Ser-62 and Ser-298, Ser-299 or Ser-301 are phosphorylated as well.

Component of the mechanistic target of rapamycin complex 2 (mTORC2), which regulates multiple cellular processes to control cell growth in response to environmental signals. In response to signals, TORC2 phosphorylates AGC protein kinase family members, such as gad8. TORC2 is required for cell survival under various stress conditions. TORC2 positively controls G1 cell-cycle arrest, sexual development and amino acid uptake. Positively regulates amino acid uptake through the control of expression of amino acid permeases. Within the mTORC2 complex, sin1 acts as a substrate adapter which recognizes and binds AGC protein kinase family members for phosphorylation by tor1. This is Target of rapamycin complex 2 subunit sin1 from Schizosaccharomyces pombe (strain 972 / ATCC 24843) (Fission yeast).